We begin with the raw amino-acid sequence, 428 residues long: UDP-N-acetylglucosamine 1-carboxyvinyltransferase (428 aa).

Residue Lys-25 to Asn-26 coordinates phosphoenolpyruvate. Arg-102 provides a ligand contact to UDP-N-acetyl-alpha-D-glucosamine. Cys-126 acts as the Proton donor in catalysis. Position 126 is a 2-(S-cysteinyl)pyruvic acid O-phosphothioketal (Cys-126). Asp-316 and Val-338 together coordinate UDP-N-acetyl-alpha-D-glucosamine.

Belongs to the EPSP synthase family. MurA subfamily.

The protein localises to the cytoplasm. The catalysed reaction is phosphoenolpyruvate + UDP-N-acetyl-alpha-D-glucosamine = UDP-N-acetyl-3-O-(1-carboxyvinyl)-alpha-D-glucosamine + phosphate. The protein operates within cell wall biogenesis; peptidoglycan biosynthesis. Its function is as follows. Cell wall formation. Adds enolpyruvyl to UDP-N-acetylglucosamine. This is UDP-N-acetylglucosamine 1-carboxyvinyltransferase from Anaplasma marginale (strain Florida).